We begin with the raw amino-acid sequence, 499 residues long: Zinc finger protein PLAG1 (499 aa).

The interval 1–33 is disordered; that stretch reads MATVIPGDLSEVRDTQKAPSGKRKRGESKPRKN. The tract at residues 2 to 84 is interaction with KPNA2; that stretch reads ATVIPGDLSE…SKYKLQRHMA (83 aa). A Nuclear localization signal motif is present at residues 22–25; that stretch reads KRKR. 7 consecutive C2H2-type zinc fingers follow at residues 34–56, 62–86, 92–114, 121–143, 150–172, 185–207, and 213–236; these read FPCQ…SFSH, YKCT…MATH, HKCN…LHTH, FKCE…LALH, LTCK…LKSH, HQCE…MVVH, and FLCQ…KKSH. The interval 41 to 242 is decreased nuclear import with localization in the nucleus but also in the cytoplasm; sequence KAFNSVEKLK…KKSHNQELLK (202 aa). The repression domain; contains 3 sumoylation motifs and massively decrease transcription activity stretch occupies residues 243-383; the sequence is VKTEPVDFLD…SQASSSKLGL (141 aa). The interval 243-499 is activates transcription; Inhibition of nuclear import due to lack of NLS and KPNA2 interaction; the sequence is VKTEPVDFLD…TLPRFHQAFQ (257 aa). Glycyl lysine isopeptide (Lys-Gly) (interchain with G-Cter in SUMO) cross-links involve residues lysine 244 and lysine 263. A disordered region spans residues 364–400; it reads QGGAPSSSQDSQASSSKLGLEPQSGSPDDGAGDLSLS. A compositionally biased stretch (low complexity) spans 369 to 379; it reads SSSQDSQASSS. The interval 384–499 is massively activates transcription; it reads EPQSGSPDDG…TLPRFHQAFQ (116 aa).

This sequence belongs to the krueppel C2H2-type zinc-finger protein family. Interacts with KPNA2, which escorts protein to the nucleus via interaction with nuclear localization signal. Interacts with E3 SUMO-protein ligase PIAS1, PIAS2 and PIAS4. Sumoylated with SUMO1; which inhibits transcriptional activity, but does not affect nuclear localization. Blockers of sumoylation pathway such as SENP3 and inactive UBE2I increases transcriptional capacity. Sumoylation is increased in the presence of PIAS1. In terms of processing, acetylated by lysine acetyltransferase EP300; which activates transcriptional capacity. Lysine residues that are sumoylated also seem to be target for acetylation. As to expression, expressed in heart, spleen, lung, kidney, brain, testis and epididymis but not in salivary glands.

It localises to the nucleus. Its function is as follows. Transcription factor whose activation results in up-regulation of target genes, such as IGFII, leading to uncontrolled cell proliferation: when overexpressed in cultured cells, higher proliferation rate and transformation are observed. Other target genes such as CRLF1, CRABP2, CRIP2, PIGF are strongly induced in cells with PLAG1 induction. Proto-oncogene whose ectopic expression can trigger the development of pleomorphic adenomas of the salivary gland and lipoblastomas. Cooperates with CBFB-MYH11. This Rattus norvegicus (Rat) protein is Zinc finger protein PLAG1 (Plag1).